Reading from the N-terminus, the 729-residue chain is 1,4-alpha-glucan branching enzyme GlgB (729 aa).

D407 functions as the Nucleophile in the catalytic mechanism. The active-site Proton donor is E460.

The protein belongs to the glycosyl hydrolase 13 family. GlgB subfamily. In terms of assembly, monomer.

The enzyme catalyses Transfers a segment of a (1-&gt;4)-alpha-D-glucan chain to a primary hydroxy group in a similar glucan chain.. It functions in the pathway glycan biosynthesis; glycogen biosynthesis. In terms of biological role, catalyzes the formation of the alpha-1,6-glucosidic linkages in glycogen by scission of a 1,4-alpha-linked oligosaccharide from growing alpha-1,4-glucan chains and the subsequent attachment of the oligosaccharide to the alpha-1,6 position. The polypeptide is 1,4-alpha-glucan branching enzyme GlgB (Pseudoalteromonas atlantica (strain T6c / ATCC BAA-1087)).